Here is a 339-residue protein sequence, read N- to C-terminus: NADP-dependent dehydrogenase M3 (339 aa).

The NADP(+) site is built by Ser-49, Ile-51, Asp-93, Tyr-206, Lys-210, Ile-240, and Gln-244. Tyr-206 (proton acceptor) is an active-site residue. Catalysis depends on Lys-210, which acts as the Lowers pKa of active site Tyr.

This sequence belongs to the short-chain dehydrogenases/reductases (SDR) family. Homodimer.

It localises to the cytoplasm. It is found in the cytosol. It functions in the pathway secondary metabolite biosynthesis. Its function is as follows. NADP-dependent dehydrogenase; part of the gene cluster that mediates the biosynthesis of squalestatin S1 (SQS1, also known as zaragozic acid A), a heavily oxidized fungal polyketide that offers potent cholesterol lowering activity by targeting squalene synthase (SS). SQS1 is composed of a 2,8-dioxobicyclic[3.2.1]octane-3,4,5-tricarboxyclic acid core that is connected to two lipophilic polyketide arms. These initial steps feature the priming of an unusual benzoic acid starter unit onto the highly reducing polyketide synthase pks2, followed by oxaloacetate extension and product release to generate a tricarboxylic acid containing product. The phenylalanine ammonia lyase (PAL) M7 and the acyl-CoA ligase M9 are involved in transforming phenylalanine into benzoyl-CoA. The citrate synthase-like protein R3 is involved in connecting the C-alpha-carbons of the hexaketide chain and oxaloacetate to afford the tricarboxylic acid unit. The potential hydrolytic enzymes, M8 and M10, are in close proximity to pks2 and may participate in product release. On the other side, the tetraketide arm is synthesized by a the squalestatin tetraketide synthase pks1 and enzymatically esterified to the core in the last biosynthetic step, by the acetyltransferase M4. The biosynthesis of the tetraketide must involve 3 rounds of chain extension. After the first and second rounds methyl-transfer occurs, and in all rounds of extension the ketoreductase and dehydratase are active. The enoyl reductase and C-MeT of pks1 are not active in the final round of extension. The acetyltransferase M4 appears to have a broad substrate selectivity for its acyl CoA substrate, allowing the in vitro synthesis of novel squalestatins. The biosynthesis of SQS1 requires several oxidative steps likely performed by oxidoreductases M1, R1 and R2. Finally, in support of the identification of the cluster as being responsible for SQS1 production, the cluster contains a gene encoding a putative squalene synthase (SS) R6, suggesting a likely mechanism for self-resistance. In Phoma sp. (strain ATCC 20986 / MF5453), this protein is NADP-dependent dehydrogenase M3.